Reading from the N-terminus, the 60-residue chain is MDPCECSKTGTCNCGGSCTCKNCSCTTCTKSCCPCCPSGCPKCASGCVCKGKTCDTTCCQ.

Met1 bears the N-acetylmethionine mark. The interval 1–28 (MDPCECSKTGTCNCGGSCTCKNCSCTTC) is beta. The a divalent metal cation site is built by Cys4, Cys6, Cys12, Cys14, Cys18, Cys20, Cys23, Cys25, Cys28, Cys32, Cys33, Cys35, Cys36, Cys40, Cys43, Cys47, Cys49, Cys54, Cys58, and Cys59. The segment at 29–60 (TKSCCPCCPSGCPKCASGCVCKGKTCDTTCCQ) is alpha.

Belongs to the metallothionein superfamily. Type 1 family.

In terms of biological role, metallothioneins have a high content of cysteine residues that bind various heavy metals. The protein is Metallothionein (mt) of Pseudopleuronectes americanus (Winter flounder).